We begin with the raw amino-acid sequence, 78 residues long: Small ribosomal subunit protein bS18 (78 aa).

It belongs to the bacterial ribosomal protein bS18 family. In terms of assembly, part of the 30S ribosomal subunit. Forms a tight heterodimer with protein bS6.

In terms of biological role, binds as a heterodimer with protein bS6 to the central domain of the 16S rRNA, where it helps stabilize the platform of the 30S subunit. The polypeptide is Small ribosomal subunit protein bS18 (Ligilactobacillus salivarius (strain UCC118) (Lactobacillus salivarius)).